A 515-amino-acid chain; its full sequence is 2-isopropylmalate synthase (515 aa).

The Pyruvate carboxyltransferase domain maps to 4–266; that stretch reads IKIFDTTLRD…ETGLILKETK (263 aa). 4 residues coordinate Mn(2+): D13, H201, H203, and N237. The segment at 392 to 515 is regulatory domain; that stretch reads KLIQFGVSYD…ANLTRLVYES (124 aa).

This sequence belongs to the alpha-IPM synthase/homocitrate synthase family. LeuA type 1 subfamily. Homodimer. The cofactor is Mn(2+).

The protein resides in the cytoplasm. The enzyme catalyses 3-methyl-2-oxobutanoate + acetyl-CoA + H2O = (2S)-2-isopropylmalate + CoA + H(+). It functions in the pathway amino-acid biosynthesis; L-leucine biosynthesis; L-leucine from 3-methyl-2-oxobutanoate: step 1/4. Functionally, catalyzes the condensation of the acetyl group of acetyl-CoA with 3-methyl-2-oxobutanoate (2-ketoisovalerate) to form 3-carboxy-3-hydroxy-4-methylpentanoate (2-isopropylmalate). This chain is 2-isopropylmalate synthase, found in Oceanobacillus iheyensis (strain DSM 14371 / CIP 107618 / JCM 11309 / KCTC 3954 / HTE831).